Here is a 388-residue protein sequence, read N- to C-terminus: MRVRRGLLRLPRRSLLAALFFFSLSSSLLYFVYVAPGIVNTYLFMMQAQGILIRDNMRTIGAQVYEQVVRSAYAKRNSSVNDSDYPLDLNHSETFLQTTTFLPEDFTYFANHTCPERLPSMKGPIDINMSEIGMDTIHELFSKDPAIKLGGHWKPSDCVPRWKVAILIPFRNRHEHLPVLLRHLIPMLQRQRLQFAFYVVEQVGTQPFNRAMLFNVGFQEAMKDLDWDCLVFHDVDHIPENDRNYYGCGQMPRHFATKLDKYMYLLPYNEFFGGVSGLTVEQFRKINGFPNAFWGWGGEDDDLWNRVQNAGYSVSRPEGDTGKYKSIPYHHRGEVQFLGRYALLRKSKERQGLDGLNNLNYFANITYDALYKNITVNLTPELAQVTEY.

Residues 1-14 (MRVRRGLLRLPRRS) lie on the Cytoplasmic side of the membrane. The chain crosses the membrane as a helical; Signal-anchor for type II membrane protein span at residues 15–35 (LLAALFFFSLSSSLLYFVYVA). Topologically, residues 36–388 (PGIVNTYLFM…TPELAQVTEY (353 aa)) are lumenal. 5 N-linked (GlcNAc...) asparagine glycosylation sites follow: N77, N81, N90, N111, and N128. Residues C114 and C158 are joined by a disulfide bond. Residues 169–173 (PFRNR), 208–210 (FNR), 235–236 (VD), Y264, and W296 each bind UDP-alpha-D-galactose. Residues C229 and C248 are joined by a disulfide bond. Mn(2+) is bound at residue D236. Residue 298 to 301 (GEDD) participates in N-acetyl-D-glucosamine binding. 329 to 330 (YH) contributes to the UDP-alpha-D-galactose binding site. R340 contacts N-acetyl-D-glucosamine. N-linked (GlcNAc...) asparagine glycans are attached at residues N364 and N373.

It belongs to the glycosyltransferase 7 family. In terms of assembly, (Microbial infection) Interacts with porcine reproductive and respiratory syndrome virus GP5. Mn(2+) serves as cofactor.

The protein resides in the golgi apparatus. The protein localises to the golgi stack membrane. It carries out the reaction a beta-D-glucosyl-(1&lt;-&gt;1')-N-acylsphing-4-enine + UDP-alpha-D-galactose = a beta-D-Gal-(1-&gt;4)-beta-D-Glc-(1&lt;-&gt;1)-Cer(d18:1(4E)) + UDP + H(+). The protein operates within protein modification; protein glycosylation. It participates in sphingolipid metabolism. Catalyzes the synthesis of lactosylceramide (LacCer) via the transfer of galactose from UDP-galactose to glucosylceramide (GlcCer). LacCer is the starting point in the biosynthesis of all gangliosides (membrane-bound glycosphingolipids) which play pivotal roles in the CNS including neuronal maturation and axonal and myelin formation. Plays a role in the glycosylation of BMPR1A and regulation of its protein stability. Essential for extraembryonic development during early embryogenesis. Functionally, (Microbial infection) May play a role in the glycosylation of porcine reproductive and respiratory syndrome virus GP5 protein and may be involved in the regulation of viral proliferation. The sequence is that of Beta-1,4-galactosyltransferase 5 (B4GALT5) from Sus scrofa (Pig).